The chain runs to 734 residues: Ribosome-releasing factor 2, mitochondrial (734 aa).

The transit peptide at 1 to 25 (MLQYCLLRRYRFLLRQHAQVIKRCY) directs the protein to the mitochondrion. Positions 27 to 303 (GDIRNIGILA…AVNAYLPMPE (277 aa)) constitute a tr-type G domain. GTP is bound by residues 36–43 (AHIDAGKT), 100–104 (DTPGH), and 154–157 (NKMD).

Belongs to the TRAFAC class translation factor GTPase superfamily. Classic translation factor GTPase family. EF-G/EF-2 subfamily.

The protein resides in the mitochondrion. In terms of biological role, mitochondrial GTPase that mediates the disassembly of ribosomes from messenger RNA at the termination of mitochondrial protein biosynthesis. Not involved in the GTP-dependent ribosomal translocation step during translation elongation. The polypeptide is Ribosome-releasing factor 2, mitochondrial (Drosophila grimshawi (Hawaiian fruit fly)).